Reading from the N-terminus, the 311-residue chain is tRNA-cytidine(32) 2-sulfurtransferase (311 aa).

A PP-loop motif motif is present at residues 47–52 (SGGKDS). Residues C122, C125, and C213 each contribute to the [4Fe-4S] cluster site.

Belongs to the TtcA family. In terms of assembly, homodimer. Mg(2+) serves as cofactor. The cofactor is [4Fe-4S] cluster.

The protein localises to the cytoplasm. The catalysed reaction is cytidine(32) in tRNA + S-sulfanyl-L-cysteinyl-[cysteine desulfurase] + AH2 + ATP = 2-thiocytidine(32) in tRNA + L-cysteinyl-[cysteine desulfurase] + A + AMP + diphosphate + H(+). It participates in tRNA modification. Functionally, catalyzes the ATP-dependent 2-thiolation of cytidine in position 32 of tRNA, to form 2-thiocytidine (s(2)C32). The sulfur atoms are provided by the cysteine/cysteine desulfurase (IscS) system. This chain is tRNA-cytidine(32) 2-sulfurtransferase, found in Salmonella choleraesuis (strain SC-B67).